The chain runs to 349 residues: Short-wave-sensitive opsin 1 (349 aa).

Over 1–34 (MSKMSEEEEFLLFKNISLVGPWDGPQYHLAPVWA) the chain is Extracellular. A glycan (N-linked (GlcNAc...) asparagine) is linked at Asn15. The chain crosses the membrane as a helical span at residues 35–59 (FHLQAVFMGFVFFVGTPLNATVLVA). The Cytoplasmic portion of the chain corresponds to 60–71 (TLRYRKLRQPLN). Residues 72–97 (YILVNVSLGGFIYCIFSVFIVFITSC) form a helical membrane-spanning segment. Residues 98–111 (YGYFVFGRHVCALE) lie on the Extracellular side of the membrane. Cysteines 108 and 185 form a disulfide. A helical membrane pass occupies residues 112–131 (AFLGCTAGLVTGWSLAFLAF). The Cytoplasmic portion of the chain corresponds to 132–150 (ERYIIICKPFGNFRFSSKH). A helical membrane pass occupies residues 151 to 174 (ALMVVVATWTIGIGVSIPPFFGWS). The Extracellular portion of the chain corresponds to 175–200 (RFVPEGLQCSCGPDWYTVGTKYYSEY). A helical membrane pass occupies residues 201 to 228 (YTWFLFIFCYIVPLSLICFSYSQLLGAL). Topologically, residues 229-250 (RAVAAQQQESASTQKAEREVSH) are cytoplasmic. A helical transmembrane segment spans residues 251–274 (MVVVMVGSFCLCYTPYAALAMYIV). Over 275-282 (NNRNHGVD) the chain is Extracellular. A helical transmembrane segment spans residues 283–307 (LRLVTIPAFFSKSACVYNPIIYCFM). Lys294 carries the N6-(retinylidene)lysine modification. Over 308–349 (NKQFRACIMEMVCGKPMTDESELSSSQKTEVSTVSSSQVGPN) the chain is Cytoplasmic. The interval 327 to 349 (ESELSSSQKTEVSTVSSSQVGPN) is disordered. Positions 330–349 (LSSSQKTEVSTVSSSQVGPN) are enriched in polar residues.

The protein belongs to the G-protein coupled receptor 1 family. Opsin subfamily. Post-translationally, phosphorylated on some or all of the serine and threonine residues present in the C-terminal region.

Its subcellular location is the cell membrane. It localises to the photoreceptor inner segment. The protein localises to the cell projection. It is found in the cilium. The protein resides in the photoreceptor outer segment. Its subcellular location is the cytoplasm. It localises to the perinuclear region. Functionally, visual pigments are the light-absorbing molecules that mediate vision. They consist of an apoprotein, opsin, covalently linked to cis-retinal. Required for the maintenance of cone outer segment organization in the ventral retina, but not essential for the maintenance of functioning cone photoreceptors. Involved in ensuring correct abundance and localization of retinal membrane proteins. May increase spectral sensitivity in dim light. In Bos taurus (Bovine), this protein is Short-wave-sensitive opsin 1 (OPN1SW).